Reading from the N-terminus, the 330-residue chain is Aspartate--ammonia ligase (330 aa).

The protein belongs to the class-II aminoacyl-tRNA synthetase family. AsnA subfamily.

The protein resides in the cytoplasm. It catalyses the reaction L-aspartate + NH4(+) + ATP = L-asparagine + AMP + diphosphate + H(+). Its pathway is amino-acid biosynthesis; L-asparagine biosynthesis; L-asparagine from L-aspartate (ammonia route): step 1/1. The polypeptide is Aspartate--ammonia ligase (Haemophilus ducreyi (strain 35000HP / ATCC 700724)).